The following is a 249-amino-acid chain: Probable transcriptional regulatory protein LIC_12886 (249 aa).

It belongs to the TACO1 family.

It localises to the cytoplasm. The protein is Probable transcriptional regulatory protein LIC_12886 of Leptospira interrogans serogroup Icterohaemorrhagiae serovar copenhageni (strain Fiocruz L1-130).